The sequence spans 506 residues: Kynurenine 3-monooxygenase (506 aa).

The tract at residues 153-174 (QETSLLPGEESEKDKKQNTEDE) is disordered. A compositionally biased stretch (basic and acidic residues) spans 162-171 (ESEKDKKQNT).

This sequence belongs to the aromatic-ring hydroxylase family. KMO subfamily. The cofactor is FAD.

The protein localises to the mitochondrion outer membrane. The enzyme catalyses L-kynurenine + NADPH + O2 + H(+) = 3-hydroxy-L-kynurenine + NADP(+) + H2O. The protein operates within cofactor biosynthesis; NAD(+) biosynthesis; quinolinate from L-kynurenine: step 1/3. Catalyzes the hydroxylation of L-kynurenine (L-Kyn) to form 3-hydroxy-L-kynurenine (L-3OHKyn). Required for synthesis of quinolinic acid. The chain is Kynurenine 3-monooxygenase from Cryptococcus neoformans var. neoformans serotype D (strain JEC21 / ATCC MYA-565) (Filobasidiella neoformans).